Consider the following 99-residue polypeptide: Aspartyl/glutamyl-tRNA(Asn/Gln) amidotransferase subunit C (99 aa).

The protein belongs to the GatC family. In terms of assembly, heterotrimer of A, B and C subunits.

The catalysed reaction is L-glutamyl-tRNA(Gln) + L-glutamine + ATP + H2O = L-glutaminyl-tRNA(Gln) + L-glutamate + ADP + phosphate + H(+). It catalyses the reaction L-aspartyl-tRNA(Asn) + L-glutamine + ATP + H2O = L-asparaginyl-tRNA(Asn) + L-glutamate + ADP + phosphate + 2 H(+). Its function is as follows. Allows the formation of correctly charged Asn-tRNA(Asn) or Gln-tRNA(Gln) through the transamidation of misacylated Asp-tRNA(Asn) or Glu-tRNA(Gln) in organisms which lack either or both of asparaginyl-tRNA or glutaminyl-tRNA synthetases. The reaction takes place in the presence of glutamine and ATP through an activated phospho-Asp-tRNA(Asn) or phospho-Glu-tRNA(Gln). This Kineococcus radiotolerans (strain ATCC BAA-149 / DSM 14245 / SRS30216) protein is Aspartyl/glutamyl-tRNA(Asn/Gln) amidotransferase subunit C.